We begin with the raw amino-acid sequence, 347 residues long: Glycerol-1-phosphate dehydrogenase [NAD(P)+] (347 aa).

NAD(+) contacts are provided by residues 94–98 (GKVID) and 116–119 (TAAS). A substrate-binding site is contributed by Asp121. Ser125 lines the NAD(+) pocket. Residue Asp168 coordinates substrate. 2 residues coordinate Zn(2+): Asp168 and His248. His252 contacts substrate. His264 lines the Zn(2+) pocket.

This sequence belongs to the glycerol-1-phosphate dehydrogenase family. In terms of assembly, homooctamer. Zn(2+) serves as cofactor.

It is found in the cytoplasm. It carries out the reaction sn-glycerol 1-phosphate + NAD(+) = dihydroxyacetone phosphate + NADH + H(+). The enzyme catalyses sn-glycerol 1-phosphate + NADP(+) = dihydroxyacetone phosphate + NADPH + H(+). It participates in membrane lipid metabolism; glycerophospholipid metabolism. Its activity is regulated as follows. Partially inhibited by divalent metal cations such as Co(2+), Cu(2+) and Ni(2+). Catalyzes the NAD(P)H-dependent reduction of dihydroxyacetonephosphate (DHAP or glycerone phosphate) to glycerol 1-phosphate (G1P). The G1P thus generated is used as the glycerophosphate backbone of phospholipids in the cellular membranes of Archaea. Is also able to catalyze the reverse reaction, i.e. the NAD(P)(+)-dependent oxidation of G1P but not of G3P. Is not active toward glycerol, dihydroxyacetone, glyceraldehyde-3-phosphate, glyceraldehyde and glycerol-2-phosphate. The chain is Glycerol-1-phosphate dehydrogenase [NAD(P)+] (egsA) from Methanothermobacter thermautotrophicus (strain ATCC 29096 / DSM 1053 / JCM 10044 / NBRC 100330 / Delta H) (Methanobacterium thermoautotrophicum).